We begin with the raw amino-acid sequence, 107 residues long: MAESHRLYVKGKHLSYQRSKRVNNPNVSLIKIEGVATPQDAQFYLGKRIAYVYRASKEVRGSKIRVMWGKVTRTHGNSGVVRATFRNNLPAKTFGASVRIFLYPSNI.

A2 carries the post-translational modification N-acetylalanine; partial. Residue K47 forms a Glycyl lysine isopeptide (Lys-Gly) (interchain with G-Cter in ubiquitin) linkage.

This sequence belongs to the eukaryotic ribosomal protein eL33 family. Component of the large ribosomal subunit (LSU). Mature yeast ribosomes consist of a small (40S) and a large (60S) subunit. The 40S small subunit contains 1 molecule of ribosomal RNA (18S rRNA) and 33 different proteins (encoded by 57 genes). The large 60S subunit contains 3 rRNA molecules (25S, 5.8S and 5S rRNA) and 46 different proteins (encoded by 81 genes). In terms of processing, N-terminally acetylated by acetyltransferase NatA.

The protein localises to the cytoplasm. Its function is as follows. Component of the ribosome, a large ribonucleoprotein complex responsible for the synthesis of proteins in the cell. The small ribosomal subunit (SSU) binds messenger RNAs (mRNAs) and translates the encoded message by selecting cognate aminoacyl-transfer RNA (tRNA) molecules. The large subunit (LSU) contains the ribosomal catalytic site termed the peptidyl transferase center (PTC), which catalyzes the formation of peptide bonds, thereby polymerizing the amino acids delivered by tRNAs into a polypeptide chain. The nascent polypeptides leave the ribosome through a tunnel in the LSU and interact with protein factors that function in enzymatic processing, targeting, and the membrane insertion of nascent chains at the exit of the ribosomal tunnel. The chain is Large ribosomal subunit protein eL33A from Saccharomyces cerevisiae (strain ATCC 204508 / S288c) (Baker's yeast).